The chain runs to 274 residues: Cytochrome b-c1 complex subunit Rieske, mitochondrial (274 aa).

Residues 79–110 (SHTDVKVPDFSDYRRAEVLDSTKSSKESSEAR) lie on the Mitochondrial matrix side of the membrane. Residues 111-137 (KGFSYLVTATTTVGVAYAAKNVVSQFV) form a helical membrane-spanning segment. The Mitochondrial intermembrane portion of the chain corresponds to 138-274 (SSMSASADVL…FTSDDVVVVG (137 aa)). In terms of domain architecture, Rieske spans 187–272 (EAAVEVSQLR…YEFTSDDVVV (86 aa)). 5 residues coordinate [2Fe-2S] cluster: cysteine 217, histidine 219, cysteine 236, histidine 239, and serine 241. A disulfide bridge connects residues cysteine 222 and cysteine 238.

Belongs to the Rieske iron-sulfur protein family. In terms of assembly, component of the ubiquinol-cytochrome c oxidoreductase (cytochrome b-c1 complex, complex III, CIII), a multisubunit enzyme composed of 11 subunits. The complex is composed of 3 respiratory subunits cytochrome b, cytochrome c1 and Rieske protein UQCRFS1, 2 core protein subunits UQCRC1/QCR1 and UQCRC2/QCR2, and 6 low-molecular weight protein subunits UQCRH/QCR6, UQCRB/QCR7, UQCRQ/QCR8, UQCR10/QCR9, UQCR11/QCR10 and subunit 9, the cleavage product of Rieske protein UQCRFS1. The complex exists as an obligatory dimer and forms supercomplexes (SCs) in the inner mitochondrial membrane with NADH-ubiquinone oxidoreductase (complex I, CI) and cytochrome c oxidase (complex IV, CIV), resulting in different assemblies (supercomplex SCI(1)III(2)IV(1) and megacomplex MCI(2)III(2)IV(2)). Incorporation of the Rieske protein UQCRFS1 is the penultimate step in complex III assembly. Interacts with TTC19, which is involved in the clearance of UQCRFS1 fragments. As to quaternary structure, component of the ubiquinol-cytochrome c oxidoreductase (cytochrome b-c1 complex, complex III, CIII). Subunit 9 corresponds to the mitochondrial targeting sequence (MTS) of Rieske protein UQCRFS1. It is retained after processing and incorporated inside complex III, where it remains bound to the complex and localizes between the 2 core subunits UQCRC1/QCR1 and UQCRC2/QCR2. The cofactor is [2Fe-2S] cluster. Post-translationally, proteolytic processing is necessary for the correct insertion of UQCRFS1 in the complex III dimer. Several fragments are generated during UQCRFS1 insertion, most probably due to the endogenous matrix-processing peptidase (MPP) activity of the 2 core protein subunits UQCRC1/QCR1 and UQCRC2/QCR2, which are homologous to the 2 mitochondrial-processing peptidase (MPP) subunits beta-MPP and alpha-MPP respectively. The action of the protease is also necessary for the clearance of the UQCRFS1 fragments.

Its subcellular location is the mitochondrion inner membrane. It catalyses the reaction a quinol + 2 Fe(III)-[cytochrome c](out) = a quinone + 2 Fe(II)-[cytochrome c](out) + 2 H(+)(out). Functionally, component of the ubiquinol-cytochrome c oxidoreductase, a multisubunit transmembrane complex that is part of the mitochondrial electron transport chain which drives oxidative phosphorylation. The respiratory chain contains 3 multisubunit complexes succinate dehydrogenase (complex II, CII), ubiquinol-cytochrome c oxidoreductase (cytochrome b-c1 complex, complex III, CIII) and cytochrome c oxidase (complex IV, CIV), that cooperate to transfer electrons derived from NADH and succinate to molecular oxygen, creating an electrochemical gradient over the inner membrane that drives transmembrane transport and the ATP synthase. The cytochrome b-c1 complex catalyzes electron transfer from ubiquinol to cytochrome c, linking this redox reaction to translocation of protons across the mitochondrial inner membrane, with protons being carried across the membrane as hydrogens on the quinol. In the process called Q cycle, 2 protons are consumed from the matrix, 4 protons are released into the intermembrane space and 2 electrons are passed to cytochrome c. The Rieske protein is a catalytic core subunit containing a [2Fe-2S] iron-sulfur cluster. It cycles between 2 conformational states during catalysis to transfer electrons from the quinol bound in the Q(0) site in cytochrome b to cytochrome c1. Incorporation of UQCRFS1 is the penultimate step in complex III assembly. Component of the ubiquinol-cytochrome c oxidoreductase (cytochrome b-c1 complex, complex III, CIII). UQCRFS1 undergoes proteolytic processing once it is incorporated in the complex III dimer. One of the fragments, called subunit 9, corresponds to its mitochondrial targeting sequence (MTS). The proteolytic processing is necessary for the correct insertion of UQCRFS1 in the complex III dimer, but the persistence of UQCRFS1-derived fragments may prevent newly imported UQCRFS1 to be processed and assembled into complex III and is detrimental for the complex III structure and function. The protein is Cytochrome b-c1 complex subunit Rieske, mitochondrial of Mus musculus (Mouse).